Reading from the N-terminus, the 365-residue chain is 3-amino-4-hydroxybenzoate 4-O-methyltransferase (365 aa).

Polar residues predominate over residues 1-18 (MTVPENAQHTAPDQTQHT). Residues 1-32 (MTVPENAQHTAPDQTQHTAPDRTRQAQQAAPD) form a disordered region. S-adenosyl-L-methionine-binding positions include aspartate 227, 253-255 (GDF), and arginine 270. Histidine 273 serves as the catalytic Proton acceptor.

The protein belongs to the class I-like SAM-binding methyltransferase superfamily. Cation-independent O-methyltransferase family.

The enzyme catalyses 3-amino-2,4-dihydroxybenzoate + S-adenosyl-L-methionine = 3-amino-2-hydroxy-4-methoxybenzoate + S-adenosyl-L-homocysteine + H(+). The protein operates within antibiotic biosynthesis. Functionally, part of a gene cluster involved in the biosynthesis of cremeomycin, a light-sensitive o-diazoquinone with antibacterial and antiproliferative effects. Catalyzes the methylation of the C4 hydroxyl group of 3-amino-2,4-dihydroxybenzoate (3,2,4-ADHBA) to form 3-amino-2-hydroxy-4-methoxybenzoate (3,2,4-AHMBA). In vitro, can also catalyze the methylation of 3-amino-4-hydroxybenzoate (3,4-AHBA). In Streptomyces cremeus, this protein is 3-amino-4-hydroxybenzoate 4-O-methyltransferase.